We begin with the raw amino-acid sequence, 520 residues long: MDIVIVVISILLALIVGIVVGYLVRRSIAEAKISSAERLAKQIVEEAHRNADAAKKEALLEAKDETHKFRQQAEDEIRERRMEAQKQENRLMQKEENLDRKSETLDKRESSLESKEQSLTEQQQQIEEMKSKVEAMKDEQQAELERISGYTSEQAKQIILERIEKEVQHESAVLIKESETRAKEEADKKAKNILSLALQRCAADHVAETTVSVVNLPNDEMKGRIIGREGRNIRTLETLTGIDLIIDDTPEAVILSGFDPIRREIARMALEKLVQDGRIHPARIEEMVEKSRREVDEYIREVGEETTFEVGVHGLHPDLVKILGRLKYRTSYGQNGLKHSAEVAYLSGLLAAELGEDVTLARRAGLLHDIGKAIDHEVEGSHVEIGKELAMKYKEHEVVINSIASHHGDEEATSIIAVLVAAADALSAARPGARSETLENYIKRLEKLEEISESFDGVEKSFAIQAGREIRIMVRPDEIDDIESISIARDIRKRIEGELDYPGHIKVTVIRETRAVEYAK.

The chain crosses the membrane as a helical span at residues 3–23 (IVIVVISILLALIVGIVVGYL). Basic and acidic residues predominate over residues 81-118 (RMEAQKQENRLMQKEENLDRKSETLDKRESSLESKEQS). Residues 81-125 (RMEAQKQENRLMQKEENLDRKSETLDKRESSLESKEQSLTEQQQQ) are disordered. In terms of domain architecture, KH spans 210–273 (TVSVVNLPND…EIARMALEKL (64 aa)). Residues 336-429 (GLKHSAEVAY…VAAADALSAA (94 aa)) form the HD domain.

It belongs to the RNase Y family.

The protein localises to the cell membrane. Its function is as follows. Endoribonuclease that initiates mRNA decay. In Oceanobacillus iheyensis (strain DSM 14371 / CIP 107618 / JCM 11309 / KCTC 3954 / HTE831), this protein is Ribonuclease Y.